We begin with the raw amino-acid sequence, 1063 residues long: Unconventional myosin-Ic (1063 aa).

At M1 the chain carries N-acetylmethionine. T10 carries the post-translational modification Phosphoserine. One can recognise a Myosin motor domain in the interval 47–731 (GVQDFVLLEN…TLFATEDSLE (685 aa)). ATP-binding positions include N88, Y96, 139-148 (SGESGAGKTE), and 192-196 (NDNSS). At K383 the chain carries N6-methyllysine. S408 is subject to Phosphoserine. The residue at position 486 (K486) is an N6-acetyllysine. A Phosphoserine modification is found at S536. The interval 608–630 (LLQLVEILRSKEPAYIRCIKPND) is actin-binding. IQ domains lie at 734–757 (RQSL…FLRV) and 758–786 (KRSA…AAQT). Residues S864 and S1041 each carry the phosphoserine modification. A TH1 domain is found at 885–1059 (KDNYPQSVPR…NGHLAVVAPR (175 aa)).

Belongs to the TRAFAC class myosin-kinesin ATPase superfamily. Myosin family. Interacts (via its IQ motifs) with CABP1 and CIB1; the interaction with CABP1 and CIB1 is calcium-dependent. Interacts (via tail domain) with PLEKHB1 (via PH domain); the interaction is not affected by the presence or absence of calcium and CALM. Interacts with POLR1A. Interacts with POLR2A. Component of the B-WICH complex, at least composed of SMARCA5/SNF2H, BAZ1B/WSTF, SF3B1, DEK, MYO1C, ERCC6, MYBBP1A and DDX21. Interacts (via its IQ motifs) with CALM; this precludes interaction with YWHAB. Interacts with YWHAB; this precludes interaction with CALM. Interacts with RPS6. Interacts with actin. Interacts with LLPH. Interacts with GLUT4. Interacts (via its IQ motifs) with SH3BGRL3; the interaction is dependent on calcium and takes place at membrane ruffles. Isoform 2 contains a N-acetylmethionine at position 1. As to expression, isoform 3 is expressed in small intestine, pancreas, brain, kidney, skin, heart muscle, testis, striated muscle, spleen, liver and lung (at protein level). Expressed in brain, testis, adrenal glands, thymus, spleen, kidney, lung, heart, cochlea and vestibule. Expressed in sensory hair cells of the inner ear. Expressed in adipocytes.

It localises to the cytoplasm. It is found in the nucleus. Its subcellular location is the cell cortex. The protein resides in the cell projection. The protein localises to the stereocilium membrane. It localises to the cytoplasmic vesicle. It is found in the ruffle membrane. Its subcellular location is the nucleolus. The protein resides in the nucleoplasm. In terms of biological role, myosins are actin-based motor molecules with ATPase activity. Unconventional myosins serve in intracellular movements. Their highly divergent tails bind to membranous compartments, which then are moved relative to actin filaments. Involved in glucose transporter recycling in response to insulin by regulating movement of intracellular GLUT4-containing vesicles to the plasma membrane. Component of the hair cell's (the sensory cells of the inner ear) adaptation-motor complex. Acts as a mediator of adaptation of mechanoelectrical transduction in stereocilia of vestibular hair cells. Binds phosphoinositides and links the actin cytoskeleton to cellular membranes. Its function is as follows. Involved in regulation of transcription. Associated with transcriptional active ribosomal genes. Appears to cooperate with the WICH chromatin-remodeling complex to facilitate transcription. Necessary for the formation of the first phosphodiester bond during transcription initiation. The protein is Unconventional myosin-Ic (Myo1c) of Mus musculus (Mouse).